Here is a 311-residue protein sequence, read N- to C-terminus: Cbb3-type cytochrome c oxidase subunit CcoP1 (311 aa).

2 helical membrane-spanning segments follow: residues 4–24 and 56–76; these read FWSG…FWLI and RWWF…LVLY. Cytochrome c domains follow at residues 130–209 and 220–302; these read QAVK…RKDL and ADLS…YSLS. Residues cysteine 143, cysteine 146, histidine 147, methionine 186, cysteine 233, cysteine 236, histidine 237, and methionine 279 each contribute to the heme c site.

The protein belongs to the CcoP / FixP family. In terms of assembly, component of the cbb3-type cytochrome c oxidase at least composed of CcoN, CcoO, CcoQ and CcoP. The cofactor is heme c.

It localises to the cell inner membrane. It participates in energy metabolism; oxidative phosphorylation. Its function is as follows. C-type cytochrome. Part of the cbb3-type cytochrome c oxidase complex. CcoP subunit is required for transferring electrons from donor cytochrome c via its heme groups to CcoO subunit. From there, electrons are shuttled to the catalytic binuclear center of CcoN subunit where oxygen reduction takes place. The complex also functions as a proton pump. The sequence is that of Cbb3-type cytochrome c oxidase subunit CcoP1 from Stutzerimonas stutzeri (Pseudomonas stutzeri).